We begin with the raw amino-acid sequence, 280 residues long: Pantothenate synthetase (280 aa).

Position 30 to 37 (30 to 37) interacts with ATP; the sequence is MGALHRGH. Histidine 37 serves as the catalytic Proton donor. Glutamine 61 provides a ligand contact to (R)-pantoate. Glutamine 61 provides a ligand contact to beta-alanine. Residue 148–151 participates in ATP binding; the sequence is GEKD. Glutamine 154 contributes to the (R)-pantoate binding site. ATP is bound by residues valine 177 and 185-188; that span reads LSSR.

The protein belongs to the pantothenate synthetase family. Homodimer.

It is found in the cytoplasm. The catalysed reaction is (R)-pantoate + beta-alanine + ATP = (R)-pantothenate + AMP + diphosphate + H(+). It functions in the pathway cofactor biosynthesis; (R)-pantothenate biosynthesis; (R)-pantothenate from (R)-pantoate and beta-alanine: step 1/1. Its function is as follows. Catalyzes the condensation of pantoate with beta-alanine in an ATP-dependent reaction via a pantoyl-adenylate intermediate. In Azobacteroides pseudotrichonymphae genomovar. CFP2, this protein is Pantothenate synthetase.